We begin with the raw amino-acid sequence, 148 residues long: Putative adenylate kinase (148 aa).

Gly-9, Gly-11, Lys-12, Ser-13, and Thr-14 together coordinate ATP. Positions 28–44 are NMP; that stretch reads EGNALAVKYGCLSGDEV. The tract at residues 91–101 is LID; sequence DRGYSPEKIDE. Residue Arg-92 coordinates ATP.

This sequence belongs to the adenylate kinase family. AK6 subfamily. As to quaternary structure, interacts with uS11. Not a structural component of 40S pre-ribosomes, but transiently interacts with them by binding to uS11.

It carries out the reaction AMP + ATP = 2 ADP. The enzyme catalyses ATP + H2O = ADP + phosphate + H(+). Its function is as follows. Broad-specificity nucleoside monophosphate (NMP) kinase that catalyzes the reversible transfer of the terminal phosphate group between nucleoside triphosphates and monophosphates. Also has ATPase activity. Involved in the late maturation steps of the 30S ribosomal particles, specifically 16S rRNA maturation. While NMP activity is not required for ribosome maturation, ATPase activity is. Associates transiently with small ribosomal subunit protein uS11. ATP hydrolysis breaks the interaction with uS11. May temporarily remove uS11 from the ribosome to enable a conformational change of the ribosomal RNA that is needed for the final maturation step of the small ribosomal subunit. The protein is Putative adenylate kinase of Thermoplasma acidophilum (strain ATCC 25905 / DSM 1728 / JCM 9062 / NBRC 15155 / AMRC-C165).